We begin with the raw amino-acid sequence, 199 residues long: Fe/S biogenesis protein NfuA (199 aa).

[4Fe-4S] cluster-binding residues include cysteine 151 and cysteine 154.

Belongs to the NfuA family. In terms of assembly, homodimer. [4Fe-4S] cluster serves as cofactor.

Its function is as follows. Involved in iron-sulfur cluster biogenesis. Binds a 4Fe-4S cluster, can transfer this cluster to apoproteins, and thereby intervenes in the maturation of Fe/S proteins. Could also act as a scaffold/chaperone for damaged Fe/S proteins. The polypeptide is Fe/S biogenesis protein NfuA (Xanthomonas campestris pv. campestris (strain 8004)).